The sequence spans 773 residues: Subtilisin-like protease SBT3.4 (773 aa).

Residues 1–23 (MRNFRSSVLVVLSLIIVLNVARA) form the signal peptide. A propeptide spans 24–108 (SAKSKVHIVY…VIPDSYYELA (85 aa)) (activation peptide). Positions 29–108 (VHIVYLGEKQ…VIPDSYYELA (80 aa)) constitute an Inhibitor I9 domain. The Peptidase S8 domain maps to 112–620 (IWDYLGPSAD…GGLVNPEKAA (509 aa)). Asp142 (charge relay system) is an active-site residue. Asn200 carries N-linked (GlcNAc...) asparagine glycosylation. The active-site Charge relay system is His216. Asn231, Asn408, and Asn536 each carry an N-linked (GlcNAc...) asparagine glycan. Residues 382–474 (SLVYPEDPGN…IDNELGTDIL (93 aa)) enclose the PA domain. The Charge relay system role is filled by Ser551. Asn643 carries an N-linked (GlcNAc...) asparagine glycan.

It belongs to the peptidase S8 family.

The protein resides in the secreted. The chain is Subtilisin-like protease SBT3.4 from Arabidopsis thaliana (Mouse-ear cress).